A 413-amino-acid chain; its full sequence is Alpha-1-antitrypsin-like protein CM55-MS (413 aa).

The first 24 residues, 1–24 (MPSSISWGLLLLAALSCLGPGSLA), serve as a signal peptide directing secretion. Gln-25 is modified (pyrrolidone carboxylic acid). Asn-65, Asn-102, Asn-165, and Asn-266 each carry an N-linked (GlcNAc...) asparagine glycan. Residues 368-387 (GATVGGITFMSRPKEVIFDR) form an RCL region.

It belongs to the serpin family. As to expression, expressed in liver.

Its subcellular location is the secreted. In terms of biological role, serine protease inhibitor. In Tamias sibiricus (Siberian chipmunk), this protein is Alpha-1-antitrypsin-like protein CM55-MS.